Reading from the N-terminus, the 79-residue chain is UPF0180 protein BcerKBAB4_1316 (79 aa).

The protein belongs to the UPF0180 family.

This Bacillus mycoides (strain KBAB4) (Bacillus weihenstephanensis) protein is UPF0180 protein BcerKBAB4_1316.